A 1134-amino-acid chain; its full sequence is Ankyrin repeat and SAM domain-containing protein 1A (1134 aa).

Gly2 carries the N-acetylglycine modification. Residues 33-55 show a composition bias toward gly residues; the sequence is GGGGGGGSGGGGGGSGGGGGGLG. The interval 33 to 57 is disordered; the sequence is GGGGGGGSGGGGGGSGGGGGGLGSS. 6 ANK repeats span residues 79–108, 112–141, 148–177, 181–210, 214–243, and 246–275; these read TGYTPLHHAALNGHKDVVEVLLRNDALTNV, KGCYPLHLAAWKGDAQIVRLLIHQGPSHTR, DNETALHCAAQYGHTEVVKVLLEELTDPTM, KFETPLDLAALYGRLEVVKMLLNAHPNLLS, KKHTPLHLAARNGHKAVVQVLLDAGMDSNY, and EMGSALHEAALFGKTDVVQILLAAGTDVNI. Residues 305–317 show a composition bias toward basic and acidic residues; it reads HMTGKRSTKEVDK. 3 disordered regions span residues 305–338, 375–422, and 469–498; these read HMTGKRSTKEVDKTPPPQPPLISSMDSISQKSQG, SMAS…EEDH, and VDGKTKDHRRSSSSRSQDSAEGQDGQVPEQ. Phosphothreonine is present on Thr318. Polar residues predominate over residues 328 to 337; it reads SMDSISQKSQ. Residues 382–392 show a composition bias toward basic and acidic residues; it reads SDQDSTNKEAE. Ser507 bears the Phosphoserine mark. Positions 569 to 650 are disordered; that stretch reads LTGLPTTNSR…MGSRSESLSN (82 aa). Over residues 572–588 the composition is skewed to polar residues; sequence LPTTNSRSHPETLTHTA. Residues 613–628 are compositionally biased toward basic and acidic residues; sequence PKAELKLSRSLSKSDS. A phosphoserine mark is found at Ser620, Ser622, Ser624, Ser626, Ser628, Ser647, Ser661, Ser663, Ser666, and Ser677. A compositionally biased stretch (polar residues) spans 633 to 650; sequence CSPTEDATMGSRSESLSN. 2 SAM domains span residues 696–762 and 770–837; these read TLEQ…LPKV and NSPP…YEEP. Polar residues predominate over residues 856–868; it reads TSSPLSQNDSCTG. Disordered regions lie at residues 856 to 896 and 1079 to 1134; these read TSSP…APSR and AEMI…LSTN. Ser887 carries the phosphoserine modification. The PID domain maps to 936–1091; the sequence is IFESCGYEAN…IETKSSKPVP (156 aa). The span at 1123–1134 shows a compositional bias: basic and acidic residues; the sequence is PKPDSKRSLSTN.

Interacts (via SAM domain) with EPHA2 (via SAM domain). Interacts with EPHA8; EPHA8 kinase activity-independent but stimulated by EPHA8 ubiquitination. Interacts (via SAM domain) with EPHA6 (via SAM domain). In terms of processing, phosphorylated on tyrosine residues in response to EGF and PDGF. As to expression, widely expressed (at protein level).

It localises to the cytoplasm. It is found in the cell projection. In terms of biological role, regulator of different signaling pathways. Regulates EPHA8 receptor tyrosine kinase signaling to control cell migration and neurite retraction. In Homo sapiens (Human), this protein is Ankyrin repeat and SAM domain-containing protein 1A (ANKS1A).